Reading from the N-terminus, the 217-residue chain is Ribonuclease T (217 aa).

Positions 20–195 constitute an Exonuclease domain; it reads VVVDVETAGL…YDTERTAMLF (176 aa). Aspartate 23, glutamate 25, histidine 182, and aspartate 187 together coordinate Mg(2+). Residue histidine 182 is the Proton donor/acceptor of the active site.

This sequence belongs to the RNase T family. Homodimer. The cofactor is Mg(2+).

Trims short 3' overhangs of a variety of RNA species, leaving a one or two nucleotide 3' overhang. Responsible for the end-turnover of tRNA: specifically removes the terminal AMP residue from uncharged tRNA (tRNA-C-C-A). Also appears to be involved in tRNA biosynthesis. The sequence is that of Ribonuclease T from Blochmanniella pennsylvanica (strain BPEN).